We begin with the raw amino-acid sequence, 237 residues long: Leucyl/phenylalanyl-tRNA--protein transferase (237 aa).

This sequence belongs to the L/F-transferase family.

The protein resides in the cytoplasm. The catalysed reaction is N-terminal L-lysyl-[protein] + L-leucyl-tRNA(Leu) = N-terminal L-leucyl-L-lysyl-[protein] + tRNA(Leu) + H(+). It carries out the reaction N-terminal L-arginyl-[protein] + L-leucyl-tRNA(Leu) = N-terminal L-leucyl-L-arginyl-[protein] + tRNA(Leu) + H(+). The enzyme catalyses L-phenylalanyl-tRNA(Phe) + an N-terminal L-alpha-aminoacyl-[protein] = an N-terminal L-phenylalanyl-L-alpha-aminoacyl-[protein] + tRNA(Phe). In terms of biological role, functions in the N-end rule pathway of protein degradation where it conjugates Leu, Phe and, less efficiently, Met from aminoacyl-tRNAs to the N-termini of proteins containing an N-terminal arginine or lysine. This is Leucyl/phenylalanyl-tRNA--protein transferase (aat) from Vibrio vulnificus (strain CMCP6).